A 160-amino-acid chain; its full sequence is Ubiquitin-like protein ATG12 (160 aa).

The tract at residues 1 to 40 (MSETPKDQGPSSPSPSPSPSAASPMPLADNEVAGSGASSP) is disordered. G160 participates in a covalent cross-link: Glycyl lysine isopeptide (Gly-Lys) (interchain with K-102 in ATG5).

It belongs to the ATG12 family. In terms of assembly, forms a conjugate with ATG5. Forms a thioester bond with the 'Cys-196' of ATG10. Interacts with the ATG7 C-terminal 40 amino acids domain. The ATG12-ATG5 conjugate forms a complex with several units of ATG16. The ATG12-ATG5 conjugate also associates with ATG3.

Its subcellular location is the preautophagosomal structure membrane. Functionally, ubiquitin-like protein involved in cytoplasm to vacuole transport (Cvt), autophagy vesicles formation, mitophagy, and nucleophagy. Conjugation with ATG5 through a ubiquitin-like conjugating system involving also ATG7 as an E1-like activating enzyme and ATG10 as an E2-like conjugating enzyme, is essential for its function. The ATG12-ATG5 conjugate acts as an E3-like enzyme which is required for lipidation of ATG8 and ATG8 association to the vesicle membranes. ATG12-ATG5 rearranges the ATG3 catalytic center and enhances its E2 activity. Autophagy is required for proper vegetative growth, asexual/sexual reproduction, and full virulence. Autophagy is particularly involved in the biosynthesis of deoxynivalenol (DON), an important virulence determinant. The protein is Ubiquitin-like protein ATG12 of Gibberella zeae (strain ATCC MYA-4620 / CBS 123657 / FGSC 9075 / NRRL 31084 / PH-1) (Wheat head blight fungus).